Here is a 357-residue protein sequence, read N- to C-terminus: Chorismate synthase (357 aa).

Position 47 (arginine 47) interacts with NADP(+). FMN contacts are provided by residues 123 to 125, glycine 281, 296 to 300, and arginine 324; these read RAS and KPTSS.

This sequence belongs to the chorismate synthase family. Homotetramer. Requires FMNH2 as cofactor.

It carries out the reaction 5-O-(1-carboxyvinyl)-3-phosphoshikimate = chorismate + phosphate. It functions in the pathway metabolic intermediate biosynthesis; chorismate biosynthesis; chorismate from D-erythrose 4-phosphate and phosphoenolpyruvate: step 7/7. Catalyzes the anti-1,4-elimination of the C-3 phosphate and the C-6 proR hydrogen from 5-enolpyruvylshikimate-3-phosphate (EPSP) to yield chorismate, which is the branch point compound that serves as the starting substrate for the three terminal pathways of aromatic amino acid biosynthesis. This reaction introduces a second double bond into the aromatic ring system. In Chlamydia trachomatis serovar L2 (strain ATCC VR-902B / DSM 19102 / 434/Bu), this protein is Chorismate synthase.